The following is a 547-amino-acid chain: Pyochelin synthase PchD (547 aa).

It belongs to the ATP-dependent AMP-binding enzyme family.

It carries out the reaction salicylate + holo-[ACP] + ATP = salicyl-[ACP] + AMP + diphosphate. The protein operates within siderophore biosynthesis. It participates in antifungal biosynthesis. Functionally, involved in the biosynthesis of the siderophore pyochelin. Specifically adenylates salicylate and loads it onto the holo form of PchE via a thioester linkage to the phosphopanthetheine moiety. Is also involved in the synthesis of the antifungal antibiotic dihydroaeruginoic acid (Dha or hydroxyphenyl-thiazolinyl-carboxylate), a precursor of pyochelin. This is Pyochelin synthase PchD from Pseudomonas aeruginosa (strain ATCC 15692 / DSM 22644 / CIP 104116 / JCM 14847 / LMG 12228 / 1C / PRS 101 / PAO1).